Here is a 309-residue protein sequence, read N- to C-terminus: Taste receptor type 2 member 31 (309 aa).

At 1–2 (MT) the chain is on the extracellular side. A helical transmembrane segment spans residues 3-23 (TFIPIIFSSVVVVLFVIGNFA). Residues 24–55 (NGFIALVNSIERVKRQKISFADQILTALAVSR) are Cytoplasmic-facing. Residues 56-76 (VGLLWVLLLNWYSTVFNPAFY) form a helical membrane-spanning segment. Residues 77–100 (SVEVRTTAYNVWAVTGHFSNWLAT) are Extracellular-facing. A helical membrane pass occupies residues 101-121 (SLSIFYLLKIANFSNLIFLHL). Over 122–126 (KRRVK) the chain is Cytoplasmic. The chain crosses the membrane as a helical span at residues 127–147 (SVILVMLLGPLLFLACQLFVI). Residues 148 to 181 (NMKEIVRTKEYEGNLTWKIKLRSAVYLSDATVTT) are Extracellular-facing. Residue asparagine 161 is glycosylated (N-linked (GlcNAc...) asparagine). The helical transmembrane segment at 182–202 (LGNLVPFTLTLLCFLLLICSL) threads the bilayer. Topologically, residues 203-229 (CKHLKKMQLHGKGSQDPSTKVHIKALQ) are cytoplasmic. Residues 230–250 (TVIFFLLLCAVYFLSIMISVW) traverse the membrane as a helical segment. The Extracellular portion of the chain corresponds to 251-259 (SFGSLENKP). A helical transmembrane segment spans residues 260–280 (VFMFCKAIRFSYPSIHPFILI). Topologically, residues 281 to 309 (WGNKKLKQTFLSVLRQVRYWVKGEKPSSP) are cytoplasmic.

It belongs to the G-protein coupled receptor T2R family. Expressed in subsets of taste receptor cells of the tongue and exclusively in gustducin-positive cells.

It is found in the membrane. Functionally, receptor that may play a role in the perception of bitterness and is gustducin-linked. May play a role in sensing the chemical composition of the gastrointestinal content. The activity of this receptor may stimulate alpha gustducin, mediate PLC-beta-2 activation and lead to the gating of TRPM5. Activated by the sulfonyl amide sweeteners saccharin and acesulfame K. The sequence is that of Taste receptor type 2 member 31 (TAS2R31) from Homo sapiens (Human).